The chain runs to 79 residues: D-alanyl carrier protein (79 aa).

The Carrier domain maps to 1–77 (MDTKQGVLDI…KIVAKVESLE (77 aa)). O-(pantetheine 4'-phosphoryl)serine is present on Ser-35.

This sequence belongs to the DltC family. 4'-phosphopantetheine is transferred from CoA to a specific serine of apo-DCP.

The protein localises to the cytoplasm. It functions in the pathway cell wall biogenesis; lipoteichoic acid biosynthesis. In terms of biological role, carrier protein involved in the D-alanylation of lipoteichoic acid (LTA). The loading of thioester-linked D-alanine onto DltC is catalyzed by D-alanine--D-alanyl carrier protein ligase DltA. The DltC-carried D-alanyl group is further transferred to cell membrane phosphatidylglycerol (PG) by forming an ester bond, probably catalyzed by DltD. D-alanylation of LTA plays an important role in modulating the properties of the cell wall in Gram-positive bacteria, influencing the net charge of the cell wall. The sequence is that of D-alanyl carrier protein from Lactobacillus helveticus (strain DPC 4571).